Reading from the N-terminus, the 406-residue chain is DNA-binding transcriptional repressor Mlc (406 aa).

Residues 33–42 (RIDLSRLAQL) constitute a DNA-binding region (H-T-H motif). 4 residues coordinate Zn(2+): histidine 247, cysteine 257, cysteine 259, and cysteine 264.

This sequence belongs to the ROK (NagC/XylR) family. Homodimer. Homotetramer. There is probably an equilibrium between the dimeric and the tetrameric form. Interacts with dephosphorylated PtsG. Mlc and PtsG EIIB domain form a complex with the 1:1 stoichiometry. Interacts with MtfA.

Its subcellular location is the cytoplasm. Activity is modulated by glucose. In the presence of glucose, is inhibited by interaction with the dephosphorylated form of PtsG, which sequesters Mlc in the inner membrane and prevents Mlc binding to its target promoters. The restriction of conformational freedom resulting from the anchoring of four ends of Mlc to the membrane could be the primary cause of its loss of DNA-binding activity in vivo. Activity is also inhibited by interaction with the Mlc titration factor A (mtfA). The inactivation mechanisms of Mlc by dephosphorylated PtsG and MtfA differ significantly. Functionally, global regulator of carbohydrate metabolism. Represses the expression of several genes involved in sugar transport and utilization, in particular phosphoenolpyruvate-carbohydrate phosphotransferase system (PTS) genes. Represses expression of ptsG (EIICB(Glc)), which encodes the PTS system glucose-specific EIICB component. Also represses the expression of the manXYZ operon, encoding the mannose-specific PTS system, expression of malT, encoding the transcriptional activator of the maltose regulon, and expression of the pts operon, composed of the genes ptsH, ptsI and crr. Represses its own expression. Acts by binding to the regulatory region of the target genes. This Escherichia coli (strain K12) protein is DNA-binding transcriptional repressor Mlc.